We begin with the raw amino-acid sequence, 223 residues long: Fibronectin type III domain-containing protein 10 (223 aa).

Residues 1–19 form the signal peptide; sequence MRAPPLLLLLAACAPPSGA. Topologically, residues 20 to 179 are extracellular; the sequence is AVDPTPPGWE…FTAEPAAMQE (160 aa). The 97-residue stretch at 72–168 folds into the Fibronectin type-III domain; the sequence is LASAGGSLRA…VVPPELAECV (97 aa). Residues Asn86 and Asn109 are each glycosylated (N-linked (GlcNAc...) asparagine). The chain crosses the membrane as a helical span at residues 180–200; it reads IVVAMTAVGGSICVMLVVICL. Residues 201–223 lie on the Cytoplasmic side of the membrane; the sequence is LVAYITENLMHPTFRRPSLRRQP.

It localises to the membrane. The chain is Fibronectin type III domain-containing protein 10 (Fndc10) from Mus musculus (Mouse).